A 393-amino-acid chain; its full sequence is Ceramide synthase 4 (393 aa).

The Lumenal portion of the chain corresponds to Met-1–Leu-31. N-linked (GlcNAc...) asparagine glycosylation is present at Asn-19. Residues Val-32–Val-52 traverse the membrane as a helical segment. Positions Trp-67–Ser-128 are homeobox-like. The TLC domain occupies Lys-131–His-332. 4 helical membrane passes run Phe-140–Leu-160, Leu-179–Phe-199, Val-217–Leu-237, and Phe-265–Ile-285. The Last loop motif motif lies at Asp-291 to Gly-301. A helical membrane pass occupies residues Phe-304–Leu-324. The Cytoplasmic segment spans residues Arg-325–Thr-393. Positions Arg-341–Thr-393 are disordered. 3 positions are modified to phosphoserine: Ser-342, Ser-349, and Ser-350. The span at Glu-345–Val-355 shows a compositional bias: acidic residues.

In terms of processing, phosphorylated at the C-terminus by CK2. Ubiquitously expressed, with highest levels in skin.

Its subcellular location is the endoplasmic reticulum membrane. It catalyses the reaction sphinganine + octadecanoyl-CoA = N-(octadecanoyl)-sphinganine + CoA + H(+). The catalysed reaction is eicosanoyl-CoA + sphinganine = N-eicosanoylsphinganine + CoA + H(+). It carries out the reaction docosanoyl-CoA + sphinganine = N-docosanoylsphinganine + CoA + H(+). The enzyme catalyses tetracosanoyl-CoA + sphinganine = N-tetracosanoylsphinganine + CoA + H(+). It catalyses the reaction hexacosanoyl-CoA + sphinganine = N-hexacosanoylsphinganine + CoA + H(+). The catalysed reaction is a fatty acyl-CoA + sphing-4-enine = an N-acylsphing-4-enine + CoA + H(+). It carries out the reaction sphing-4-enine + octadecanoyl-CoA = N-octadecanoylsphing-4-enine + CoA + H(+). The enzyme catalyses hexadecasphinganine + octadecanoyl-CoA = N-octadecanoylhexadecasphinganine + CoA + H(+). It participates in lipid metabolism; sphingolipid metabolism. Functionally, ceramide synthase that catalyzes formation of ceramide from sphinganine and acyl-CoA substrates, with high selectivity toward long and very-long chains (C18:0-C22:0) as acyl donor. The chain is Ceramide synthase 4 from Mus musculus (Mouse).